A 1188-amino-acid chain; its full sequence is Oxysterol-binding protein homolog 1 (1188 aa).

ANK repeat units lie at residues 51 to 80 (VLHLMLHYAVQVAPMAVIKEIVHHWVSTTN), 96 to 125 (NGNTPLHIAAYQSRGDIVAFLLDQPTINDC), and 196 to 225 (TGDTVLHEFVKKRDVIMCRWLLEHGADPFK). The 50-residue stretch at 330–379 (MSSCSLHLDSSEKLKFEIIGGNNGVIRWHLKGNHPIETNRWVWAIQGAIR) folds into the PH domain. Position 394 is a phosphoserine (Ser394). Disordered regions lie at residues 415–546 (ATSK…GDED) and 661–692 (QKKLNNQPQVETEANEESDDANSMIKGSQEST). Polar residues predominate over residues 424-433 (PHLSKSTLTQ). Residues 443–462 (TNNNNNKSNNDYDDNNNNNN) show a composition bias toward low complexity. A compositionally biased stretch (acidic residues) spans 463-473 (NDDDDYDDDDE). 2 positions are modified to phosphoserine: Ser490 and Ser500. The span at 514 to 529 (PSDDEGYSEDDSDDDG) shows a compositional bias: acidic residues. A phosphoserine mark is found at Ser678, Ser683, and Ser691. Phosphothreonine is present on residues Thr692 and Thr694. Phosphoserine occurs at positions 708 and 712. An FFAT motif is present at residues 716-722 (EFFDAEE). A disordered region spans residues 721–755 (EEAASDKKANDSEDLTTNKETPANAKPQEEAPEDE). Residues 800-1174 (LWSVLKSMVG…YWKFNGEYWN (375 aa)) form an OSBP-related domain (ORD) region. Residues Asp834 and Lys962 each contribute to the ergosterol site.

Belongs to the OSBP family. In terms of assembly, interacts with NVJ1. Interacts with the AAA ATPase AFG2; regulates OSH1 membrane association. AFG2 is required for membrane dissociation of OSH1. Interacts with SCS2.

It is found in the golgi apparatus membrane. Its subcellular location is the nucleus outer membrane. It localises to the endoplasmic reticulum membrane. The protein resides in the vacuole membrane. In terms of biological role, lipid transport protein (LTP) involved in non-vesicular transfer of lipids between membranes. Functions in phosphoinositide-coupled directional transport of various lipids by carrying the lipid molecule in a hydrophobic pocket and transferring it between membranes through the cytosol. Involved in maintenance of intracellular sterol distribution and homeostasis. Involved in non-vesicular transport of ergosterol and PI(4)P at the NVJ. Binds sterol and PI4P in a mutually exclusive manner. May be involved in formation of PMN vesicles by altering the membrane lipid composition. The protein is Oxysterol-binding protein homolog 1 of Saccharomyces cerevisiae (strain ATCC 204508 / S288c) (Baker's yeast).